Reading from the N-terminus, the 229-residue chain is Probable queuosine precursor transporter (229 aa).

7 helical membrane-spanning segments follow: residues Phe6 to Gly26, Met28 to Thr48, Val49 to Ala69, Val86 to Phe106, Leu118 to Phe138, Leu160 to Val182, and Val192 to Tyr214.

It belongs to the vitamin uptake transporter (VUT/ECF) (TC 2.A.88) family. Q precursor transporter subfamily.

It is found in the cell membrane. In terms of biological role, involved in the import of queuosine (Q) precursors, required for Q precursor salvage. The sequence is that of Probable queuosine precursor transporter (ypdP) from Bacillus subtilis (strain 168).